The chain runs to 271 residues: MVLIKEFRVVLPCSVQEYQVGQLYSVAEASKNETGGGEGIEVLKNEPYEKDGEKGQYTHKIYHLKSKVPAFVRMIAPEGSLVFHEKAWNAYPYCRTIVTNEYMKDDFFIKIETWHKPDLGTLENVHGLDPNTWKTVEIVHIDIADRSQVEPADYKADEDPALFQSVKTKRGPLGPNWKKELANNPDCPQMCAYKLVTIKFKWWGLQSKVENFIQKQEKRIFTNFHRQLFCWIDKWIDLTMEDIRRMEDETQKELETMRKKGSVRGTSAADV.

Residue lysine 215 is modified to N6-acetyllysine. The residue at position 262 (serine 262) is a Phosphoserine.

Belongs to the PtdIns transfer protein family. PI transfer class I subfamily. Constitutive phosphorylation of Ser-262 has no effect on phospholipid transfer activity but is required for Golgi targeting.

It is found in the golgi apparatus. The protein resides in the golgi apparatus membrane. The protein localises to the endoplasmic reticulum membrane. It catalyses the reaction a 1,2-diacyl-sn-glycero-3-phosphocholine(in) = a 1,2-diacyl-sn-glycero-3-phosphocholine(out). The enzyme catalyses a 1,2-diacyl-sn-glycero-3-phospho-(1D-myo-inositol)(in) = a 1,2-diacyl-sn-glycero-3-phospho-(1D-myo-inositol)(out). It carries out the reaction an N-(acyl)-sphingosylphosphocholine(in) = an N-(acyl)-sphingosylphosphocholine(out). In terms of biological role, catalyzes the transfer of phosphatidylinositol, phosphatidylcholine and sphingomyelin between membranes. Required for COPI-mediated retrograde transport from the Golgi to the endoplasmic reticulum; phosphatidylinositol and phosphatidylcholine transfer activity is essential for this function. In Bos taurus (Bovine), this protein is Phosphatidylinositol transfer protein beta isoform (PITPNB).